The following is a 374-amino-acid chain: Isopentenyl-diphosphate delta-isomerase (374 aa).

13–14 (RK) lines the substrate pocket. Residues 71 to 73 (GMT), Ser104, and Asn132 contribute to the FMN site. 104-106 (SQR) lines the substrate pocket. Substrate is bound at residue Gln171. A Mg(2+)-binding site is contributed by Glu172. FMN is bound by residues Lys203, Thr233, 282 to 284 (GMR), and 303 to 304 (AL).

This sequence belongs to the IPP isomerase type 2 family. In terms of assembly, homooctamer. Dimer of tetramers. It depends on FMN as a cofactor. Requires NADPH as cofactor. Mg(2+) is required as a cofactor.

It is found in the cytoplasm. The catalysed reaction is isopentenyl diphosphate = dimethylallyl diphosphate. In terms of biological role, involved in the biosynthesis of isoprenoids. Catalyzes the 1,3-allylic rearrangement of the homoallylic substrate isopentenyl (IPP) to its allylic isomer, dimethylallyl diphosphate (DMAPP). The protein is Isopentenyl-diphosphate delta-isomerase of Thermococcus kodakarensis (strain ATCC BAA-918 / JCM 12380 / KOD1) (Pyrococcus kodakaraensis (strain KOD1)).